Consider the following 124-residue polypeptide: Large ribosomal subunit protein eL31 (124 aa).

Belongs to the eukaryotic ribosomal protein eL31 family.

The protein is Large ribosomal subunit protein eL31 (RpL31) of Spodoptera frugiperda (Fall armyworm).